Here is a 197-residue protein sequence, read N- to C-terminus: MLTKPSALSRLVGELKKLPGVGERTALRLAFHLLKTPQNLTALSESLLEVKSRVRSCSICFAITEDDPCAICAGDRDTGTICVVENSQDLMALERSNAYHGTYHVLEGVISPLAGIGPSELRIAELLARIGRGGVDEVVIATNFTVEGEATALYLAKLLKPLGIRISRLAHGIPLGSDIEYVDAATVQWALQGRNQL.

A C4-type zinc finger spans residues 57 to 72; sequence CSICFAITEDDPCAIC. The 96-residue stretch at 79–174 folds into the Toprim domain; that stretch reads GTICVVENSQ…RISRLAHGIP (96 aa).

The protein belongs to the RecR family.

In terms of biological role, may play a role in DNA repair. It seems to be involved in an RecBC-independent recombinational process of DNA repair. It may act with RecF and RecO. This Pelobacter propionicus (strain DSM 2379 / NBRC 103807 / OttBd1) protein is Recombination protein RecR.